Here is a 545-residue protein sequence, read N- to C-terminus: Mitogen-activated protein kinase kinase kinase mom-4 (545 aa).

Low complexity predominate over residues 1-21; sequence MDTSPHSKPSSSSASQSSHSP. The interval 1 to 35 is disordered; the sequence is MDTSPHSKPSSSSASQSSHSPSPAPVTAPRKTRDS. The Protein kinase domain occupies 53 to 308; that stretch reads NLNSHQLGRG…AECLQYFTAL (256 aa). ATP-binding positions include 59 to 67 and Lys-86; that span reads LGRGTYGIV. The Proton acceptor role is filled by Asp-178. The disordered stretch occupies residues 316-444; that stretch reads NVPLADANTN…PIDDRRDSNE (129 aa). Composition is skewed to polar residues over residues 352–369 and 396–411; these read NGRT…QAVN and ASSS…QSEA.

It belongs to the protein kinase superfamily. STE Ser/Thr protein kinase family. MAP kinase kinase kinase subfamily. Interacts with, and is activated by, tap-1. Mg(2+) is required as a cofactor.

It catalyses the reaction L-seryl-[protein] + ATP = O-phospho-L-seryl-[protein] + ADP + H(+). The catalysed reaction is L-threonyl-[protein] + ATP = O-phospho-L-threonyl-[protein] + ADP + H(+). Functionally, part of the Wnt signaling pathway essential for the specification of the mesodermal cell fate in early embryos. Stimulates the wrm-1/lit-1-dependent phosphorylation of pop-1 and plays a role in the initial nuclear accumulation of wrm-1. This is Mitogen-activated protein kinase kinase kinase mom-4 from Caenorhabditis briggsae.